The following is a 61-amino-acid chain: Small ribosomal subunit protein uS14 (61 aa).

Zn(2+) is bound by residues C24, C27, C40, and C43.

It belongs to the universal ribosomal protein uS14 family. Zinc-binding uS14 subfamily. Part of the 30S ribosomal subunit. Contacts proteins S3 and S10. The cofactor is Zn(2+).

Functionally, binds 16S rRNA, required for the assembly of 30S particles and may also be responsible for determining the conformation of the 16S rRNA at the A site. The sequence is that of Small ribosomal subunit protein uS14 from Carboxydothermus hydrogenoformans (strain ATCC BAA-161 / DSM 6008 / Z-2901).